The primary structure comprises 225 residues: Ribose-5-phosphate isomerase A (225 aa).

Substrate contacts are provided by residues 26-29 (TGST), 82-85 (DGAD), and 95-98 (KGGG). Residue Glu-104 is the Proton acceptor of the active site. Lys-122 provides a ligand contact to substrate.

This sequence belongs to the ribose 5-phosphate isomerase family. Homodimer.

It catalyses the reaction aldehydo-D-ribose 5-phosphate = D-ribulose 5-phosphate. It participates in carbohydrate degradation; pentose phosphate pathway; D-ribose 5-phosphate from D-ribulose 5-phosphate (non-oxidative stage): step 1/1. Catalyzes the reversible conversion of ribose-5-phosphate to ribulose 5-phosphate. The polypeptide is Ribose-5-phosphate isomerase A (Streptococcus sanguinis (strain SK36)).